Here is a 588-residue protein sequence, read N- to C-terminus: 2-isopropylmalate synthase (588 aa).

A Pyruvate carboxyltransferase domain is found at Pro40–Asp314. Residues Asp49, His253, His255, and Asn289 each coordinate Mg(2+). Residues Ala456–Val588 form a regulatory domain region.

It belongs to the alpha-IPM synthase/homocitrate synthase family. LeuA type 2 subfamily. Homodimer. Requires Mg(2+) as cofactor.

It is found in the cytoplasm. It carries out the reaction 3-methyl-2-oxobutanoate + acetyl-CoA + H2O = (2S)-2-isopropylmalate + CoA + H(+). The protein operates within amino-acid biosynthesis; L-leucine biosynthesis; L-leucine from 3-methyl-2-oxobutanoate: step 1/4. Functionally, catalyzes the condensation of the acetyl group of acetyl-CoA with 3-methyl-2-oxobutanoate (2-ketoisovalerate) to form 3-carboxy-3-hydroxy-4-methylpentanoate (2-isopropylmalate). The protein is 2-isopropylmalate synthase of Clavibacter sepedonicus (Clavibacter michiganensis subsp. sepedonicus).